A 130-amino-acid polypeptide reads, in one-letter code: Small ribosomal subunit protein uS8 (130 aa).

Belongs to the universal ribosomal protein uS8 family. As to quaternary structure, part of the 30S ribosomal subunit. Contacts proteins S5 and S12.

One of the primary rRNA binding proteins, it binds directly to 16S rRNA central domain where it helps coordinate assembly of the platform of the 30S subunit. In Ruegeria sp. (strain TM1040) (Silicibacter sp.), this protein is Small ribosomal subunit protein uS8.